The sequence spans 521 residues: Caspase-10 (521 aa).

Positions 1-219 (MKSQGQHWYS…GEEELVSQTD (219 aa)) are excised as a propeptide. DED domains follow at residues 19–97 (SFRE…HLNC) and 114–187 (LFRN…NIEK). Polar residues-rich tracts occupy residues 231–248 (SWQNKHAGSNGNRATNGA) and 259–268 (ASANTLNSET). The tract at residues 231–269 (SWQNKHAGSNGNRATNGAPSLVSRGMQGASANTLNSETS) is disordered. Catalysis depends on residues H358 and C401.

Belongs to the peptidase C14A family. As to quaternary structure, heterotetramer that consists of two anti-parallel arranged heterodimers, each one formed by a 23/17 kDa (p23/17) (depending on the splicing events) and a 12 kDa (p12) subunit. Self-associates. Interacts with FADD and CASP8. Found in a Fas signaling complex consisting of FAS, FADD, CASP8 and CASP10. Interacts with RFFL and RNF34; negatively regulate CASP10 through proteasomal degradation. Interacts with RIOK3. In terms of processing, cleavage by granzyme B and autocatalytic activity generate the two active subunits. As to expression, detectable in most tissues. Lowest expression is seen in brain, kidney, prostate, testis and colon.

It carries out the reaction Strict requirement for Asp at position P1 and has a preferred cleavage sequence of Leu-Gln-Thr-Asp-|-Gly.. Functionally, involved in the activation cascade of caspases responsible for apoptosis execution. Recruited to both Fas- and TNFR-1 receptors in a FADD dependent manner. May participate in the granzyme B apoptotic pathways. Cleaves and activates effector caspases CASP3, CASP4, CASP6, CASP7, CASP8 and CASP9. Hydrolyzes the small- molecule substrates, Tyr-Val-Ala-Asp-|-AMC and Asp-Glu-Val-Asp-|-AMC. In terms of biological role, isoform 7 can enhance NF-kappaB activity but promotes only slight apoptosis. Its function is as follows. Isoform C is proteolytically inactive. This chain is Caspase-10 (CASP10), found in Homo sapiens (Human).